A 319-amino-acid chain; its full sequence is tRNA dimethylallyltransferase (319 aa).

Residue 15-22 coordinates ATP; sequence GPTASGKS. 17 to 22 provides a ligand contact to substrate; that stretch reads TASGKS. Interaction with substrate tRNA stretches follow at residues 40–43 and 164–168; these read DSRQ and QRLVR.

It belongs to the IPP transferase family. In terms of assembly, monomer. Mg(2+) is required as a cofactor.

The enzyme catalyses adenosine(37) in tRNA + dimethylallyl diphosphate = N(6)-dimethylallyladenosine(37) in tRNA + diphosphate. In terms of biological role, catalyzes the transfer of a dimethylallyl group onto the adenine at position 37 in tRNAs that read codons beginning with uridine, leading to the formation of N6-(dimethylallyl)adenosine (i(6)A). This Chlorobium phaeobacteroides (strain DSM 266 / SMG 266 / 2430) protein is tRNA dimethylallyltransferase.